The chain runs to 152 residues: Protein Turandot X (152 aa).

The signal sequence occupies residues 1–22 (MGFYISSLLICVFLGIVRFASA).

Belongs to the Turandot family.

It localises to the secreted. Its function is as follows. A humoral factor that may play a role in stress tolerance. The polypeptide is Protein Turandot X (Drosophila erecta (Fruit fly)).